The following is a 308-amino-acid chain: Glycerol-3-phosphate dehydrogenase [NAD(P)+] (308 aa).

NADPH is bound by residues W13, R33, and K81. Positions 81 and 109 each coordinate sn-glycerol 3-phosphate. A113 is a binding site for NADPH. Sn-glycerol 3-phosphate-binding residues include K163, D216, S226, R227, and N228. Catalysis depends on K163, which acts as the Proton acceptor. R227 is a binding site for NADPH. E253 lines the NADPH pocket.

The protein belongs to the NAD-dependent glycerol-3-phosphate dehydrogenase family.

It is found in the cytoplasm. The enzyme catalyses sn-glycerol 3-phosphate + NAD(+) = dihydroxyacetone phosphate + NADH + H(+). The catalysed reaction is sn-glycerol 3-phosphate + NADP(+) = dihydroxyacetone phosphate + NADPH + H(+). It functions in the pathway membrane lipid metabolism; glycerophospholipid metabolism. Catalyzes the reduction of the glycolytic intermediate dihydroxyacetone phosphate (DHAP) to sn-glycerol 3-phosphate (G3P), the key precursor for phospholipid synthesis. This is Glycerol-3-phosphate dehydrogenase [NAD(P)+] from Thermosynechococcus vestitus (strain NIES-2133 / IAM M-273 / BP-1).